Reading from the N-terminus, the 142-residue chain is UPF0305 protein MK0666 (142 aa).

This sequence belongs to the UPF0305 family.

This Methanopyrus kandleri (strain AV19 / DSM 6324 / JCM 9639 / NBRC 100938) protein is UPF0305 protein MK0666.